Reading from the N-terminus, the 502-residue chain is Glycerol kinase (502 aa).

T14 provides a ligand contact to ADP. Residues T14, T15, and S16 each contribute to the ATP site. T14 is a sn-glycerol 3-phosphate binding site. Position 18 (R18) interacts with ADP. Residues R84, E85, Y136, and D246 each contribute to the sn-glycerol 3-phosphate site. Residues R84, E85, Y136, D246, and Q247 each contribute to the glycerol site. 2 residues coordinate ADP: T268 and G311. Residues T268, G311, Q315, and G412 each coordinate ATP. Positions 412 and 416 each coordinate ADP.

It belongs to the FGGY kinase family. As to quaternary structure, homotetramer and homodimer (in equilibrium). Heterodimer with EIIA-Glc. Binds 1 zinc ion per glycerol kinase EIIA-Glc dimer. The zinc ion is important for dimerization.

It catalyses the reaction glycerol + ATP = sn-glycerol 3-phosphate + ADP + H(+). Its pathway is polyol metabolism; glycerol degradation via glycerol kinase pathway; sn-glycerol 3-phosphate from glycerol: step 1/1. Activity of this regulatory enzyme is affected by several metabolites. Allosterically and non-competitively inhibited by fructose 1,6-bisphosphate (FBP) and unphosphorylated phosphocarrier protein EIIA-Glc (III-Glc), an integral component of the bacterial phosphotransferase (PTS) system. Key enzyme in the regulation of glycerol uptake and metabolism. Catalyzes the phosphorylation of glycerol to yield sn-glycerol 3-phosphate. The protein is Glycerol kinase of Escherichia coli O81 (strain ED1a).